Here is a 460-residue protein sequence, read N- to C-terminus: uncharacterized protein (460 aa).

Positions Pro-8–Lys-66 constitute a TRAM domain. Residues Cys-79, Cys-85, Cys-88, and Cys-166 each coordinate [4Fe-4S] cluster. S-adenosyl-L-methionine-binding residues include Gln-290, Tyr-319, Glu-340, and Asp-388. Catalysis depends on Cys-415, which acts as the Nucleophile.

This sequence belongs to the class I-like SAM-binding methyltransferase superfamily. RNA M5U methyltransferase family.

This is an uncharacterized protein from Bacillus cereus (strain ATCC 10987 / NRS 248).